Consider the following 308-residue polypeptide: Methionyl-tRNA formyltransferase (308 aa).

109–112 contacts (6S)-5,6,7,8-tetrahydrofolate; sequence SLLP.

This sequence belongs to the Fmt family.

It catalyses the reaction L-methionyl-tRNA(fMet) + (6R)-10-formyltetrahydrofolate = N-formyl-L-methionyl-tRNA(fMet) + (6S)-5,6,7,8-tetrahydrofolate + H(+). Its function is as follows. Attaches a formyl group to the free amino group of methionyl-tRNA(fMet). The formyl group appears to play a dual role in the initiator identity of N-formylmethionyl-tRNA by promoting its recognition by IF2 and preventing the misappropriation of this tRNA by the elongation apparatus. The protein is Methionyl-tRNA formyltransferase of Salinispora tropica (strain ATCC BAA-916 / DSM 44818 / JCM 13857 / NBRC 105044 / CNB-440).